We begin with the raw amino-acid sequence, 410 residues long: Multifunctional CCA protein (410 aa).

G8 and R11 together coordinate ATP. CTP contacts are provided by G8 and R11. Positions 21 and 23 each coordinate Mg(2+). The ATP site is built by R91, R137, and R140. Residues R91, R137, and R140 each coordinate CTP. Positions 228–329 (TGVHVLSVLQ…LELLQSFDVY (102 aa)) constitute an HD domain.

This sequence belongs to the tRNA nucleotidyltransferase/poly(A) polymerase family. Bacterial CCA-adding enzyme type 1 subfamily. Monomer. Can also form homodimers and oligomers. Mg(2+) is required as a cofactor. The cofactor is Ni(2+).

It carries out the reaction a tRNA precursor + 2 CTP + ATP = a tRNA with a 3' CCA end + 3 diphosphate. The catalysed reaction is a tRNA with a 3' CCA end + 2 CTP + ATP = a tRNA with a 3' CCACCA end + 3 diphosphate. Catalyzes the addition and repair of the essential 3'-terminal CCA sequence in tRNAs without using a nucleic acid template. Adds these three nucleotides in the order of C, C, and A to the tRNA nucleotide-73, using CTP and ATP as substrates and producing inorganic pyrophosphate. tRNA 3'-terminal CCA addition is required both for tRNA processing and repair. Also involved in tRNA surveillance by mediating tandem CCA addition to generate a CCACCA at the 3' terminus of unstable tRNAs. While stable tRNAs receive only 3'-terminal CCA, unstable tRNAs are marked with CCACCA and rapidly degraded. The sequence is that of Multifunctional CCA protein from Pseudomonas aeruginosa (strain ATCC 15692 / DSM 22644 / CIP 104116 / JCM 14847 / LMG 12228 / 1C / PRS 101 / PAO1).